An 834-amino-acid polypeptide reads, in one-letter code: DNA polymerase I, thermostable (834 aa).

A 5'-3' exonuclease domain is found at 176–262 (KPEQWVDFRA…DLPLEVDLAQ (87 aa)). Positions 412-834 (ERLHRNLLKR…MGEDWLSAKG (423 aa)) are polymerase.

Belongs to the DNA polymerase type-A family.

It carries out the reaction DNA(n) + a 2'-deoxyribonucleoside 5'-triphosphate = DNA(n+1) + diphosphate. Functionally, has 5'-3' exonuclease activity and no 3'-5' exonuclease activity. The polypeptide is DNA polymerase I, thermostable (polA) (Thermus caldophilus).